The chain runs to 392 residues: Probable myosin light chain kinase DDB_G0271550 (392 aa).

One can recognise a Protein kinase domain in the interval 20 to 278; it reads YEFGPEIGRG…ASQCIKHPWL (259 aa). ATP-binding positions include 26–34 and Lys49; that span reads IGRGAFSIV. The active-site Proton acceptor is the Asp142. The span at 317–326 shows a compositional bias: polar residues; that stretch reads SQSTPNLHSA. The disordered stretch occupies residues 317–392; sequence SQSTPNLHSA…NNNNNNNNNI (76 aa). Residues 327-392 show a composition bias toward low complexity; that stretch reads NSNTNTNSLS…NNNNNNNNNI (66 aa).

This sequence belongs to the protein kinase superfamily. CAMK Ser/Thr protein kinase family. CaMK subfamily.

It catalyses the reaction L-seryl-[myosin light chain] + ATP = O-phospho-L-seryl-[myosin light chain] + ADP + H(+). The enzyme catalyses L-threonyl-[myosin light chain] + ATP = O-phospho-L-threonyl-[myosin light chain] + ADP + H(+). Functionally, may phosphorylate a specific serine in the N-terminus of a myosin light chain. The polypeptide is Probable myosin light chain kinase DDB_G0271550 (Dictyostelium discoideum (Social amoeba)).